Here is a 113-residue protein sequence, read N- to C-terminus: MSMFRAKKLDLGCFTNVRVLRDHSKRKAFLEAEPERQALRYVIRNTTLPARTRAVAQLQLTQMHAYTRPTQIRNRCILGGKSRGILRDFKMTRYNFRMNALMGNIPGVKKASW.

This sequence belongs to the universal ribosomal protein uS14 family. Component of the mitochondrial small ribosomal subunit (mt-SSU). Mature N.crassa 74S mitochondrial ribosomes consist of a small (37S) and a large (54S) subunit. The 37S small subunit contains a 16S ribosomal RNA (16S mt-rRNA) and 32 different proteins. The 54S large subunit contains a 23S rRNA (23S mt-rRNA) and 42 different proteins.

It is found in the mitochondrion. Component of the mitochondrial ribosome (mitoribosome), a dedicated translation machinery responsible for the synthesis of mitochondrial genome-encoded proteins, including at least some of the essential transmembrane subunits of the mitochondrial respiratory chain. The mitoribosomes are attached to the mitochondrial inner membrane and translation products are cotranslationally integrated into the membrane. The chain is Small ribosomal subunit protein uS14m (mrp2) from Neurospora crassa (strain ATCC 24698 / 74-OR23-1A / CBS 708.71 / DSM 1257 / FGSC 987).